The chain runs to 205 residues: GTP cyclohydrolase-2 (205 aa).

49–53 (RIHSE) is a GTP binding site. 3 residues coordinate Zn(2+): cysteine 54, cysteine 65, and cysteine 67. GTP is bound by residues glutamine 70, 92–94 (EGR), and threonine 114. Aspartate 126 functions as the Proton acceptor in the catalytic mechanism. Arginine 128 (nucleophile) is an active-site residue. Threonine 149 and lysine 154 together coordinate GTP.

The protein belongs to the GTP cyclohydrolase II family. It depends on Zn(2+) as a cofactor.

The enzyme catalyses GTP + 4 H2O = 2,5-diamino-6-hydroxy-4-(5-phosphoribosylamino)-pyrimidine + formate + 2 phosphate + 3 H(+). The protein operates within cofactor biosynthesis; riboflavin biosynthesis; 5-amino-6-(D-ribitylamino)uracil from GTP: step 1/4. Its function is as follows. Catalyzes the conversion of GTP to 2,5-diamino-6-ribosylamino-4(3H)-pyrimidinone 5'-phosphate (DARP), formate and pyrophosphate. The chain is GTP cyclohydrolase-2 from Shewanella piezotolerans (strain WP3 / JCM 13877).